The following is a 419-amino-acid chain: UDP-N-acetylglucosamine 1-carboxyvinyltransferase (419 aa).

22–23 (KN) serves as a coordination point for phosphoenolpyruvate. Arginine 91 lines the UDP-N-acetyl-alpha-D-glucosamine pocket. The active-site Proton donor is the cysteine 115. The residue at position 115 (cysteine 115) is a 2-(S-cysteinyl)pyruvic acid O-phosphothioketal. UDP-N-acetyl-alpha-D-glucosamine-binding positions include 120 to 124 (RPVDL), 160 to 163 (KVSV), aspartate 305, and isoleucine 327.

It belongs to the EPSP synthase family. MurA subfamily.

It is found in the cytoplasm. It carries out the reaction phosphoenolpyruvate + UDP-N-acetyl-alpha-D-glucosamine = UDP-N-acetyl-3-O-(1-carboxyvinyl)-alpha-D-glucosamine + phosphate. It functions in the pathway cell wall biogenesis; peptidoglycan biosynthesis. Its function is as follows. Cell wall formation. Adds enolpyruvyl to UDP-N-acetylglucosamine. This is UDP-N-acetylglucosamine 1-carboxyvinyltransferase from Sodalis glossinidius (strain morsitans).